The primary structure comprises 346 residues: STE20-related kinase adapter protein stlk (346 aa).

In terms of domain architecture, Protein kinase spans 10–298 (YKLLEILKNG…ASKLMTHSFL (289 aa)). ATP is bound by residues 16–24 (LKNGMIGTV) and Lys-38.

The protein belongs to the protein kinase superfamily. STE Ser/Thr protein kinase family. STE20 subfamily.

This is STE20-related kinase adapter protein stlk from Drosophila melanogaster (Fruit fly).